Here is a 468-residue protein sequence, read N- to C-terminus: ATP synthase subunit beta 2 (468 aa).

ATP is bound at residue 145–152; that stretch reads GGAGVGKT.

This sequence belongs to the ATPase alpha/beta chains family. As to quaternary structure, F-type ATPases have 2 components, CF(1) - the catalytic core - and CF(0) - the membrane proton channel. CF(1) has five subunits: alpha(3), beta(3), gamma(1), delta(1), epsilon(1). CF(0) has three main subunits: a(1), b(2) and c(9-12). The alpha and beta chains form an alternating ring which encloses part of the gamma chain. CF(1) is attached to CF(0) by a central stalk formed by the gamma and epsilon chains, while a peripheral stalk is formed by the delta and b chains.

The protein resides in the cell membrane. It carries out the reaction ATP + H2O + 4 H(+)(in) = ADP + phosphate + 5 H(+)(out). Functionally, produces ATP from ADP in the presence of a proton gradient across the membrane. The catalytic sites are hosted primarily by the beta subunits. In Mycoplasmopsis pulmonis (strain UAB CTIP) (Mycoplasma pulmonis), this protein is ATP synthase subunit beta 2.